The sequence spans 572 residues: [Pyruvate dehydrogenase [acetyl-transferring]]-phosphatase 1, mitochondrial (572 aa).

Residues 95 to 122 form a disordered region; sequence NTSGNINMPSPNPKGTETQKSQRSQNDQ. The region spanning 153-543 is the PPM-type phosphatase domain; sequence RYDVAQLPSN…DDLTVTVAFF (391 aa). Positions 197, 198, 424, and 480 each coordinate Mn(2+). Positions 470–480 are enriched in basic and acidic residues; sequence EAQRPAFRYKD. Positions 470-492 are disordered; it reads EAQRPAFRYKDNNSSSPSGSNPE. Over residues 481-491 the composition is skewed to low complexity; sequence NNSSSPSGSNP.

It belongs to the PP2C family. Requires Mg(2+) as cofactor. The cofactor is Mn(2+). Post-translationally, processed by mitochondrial inner membrane protease (IMP) complex and released to the intermembrane space.

The protein localises to the mitochondrion intermembrane space. It catalyses the reaction O-phospho-L-seryl-[pyruvate dehydrogenase E1 alpha subunit] + H2O = L-seryl-[pyruvate dehydrogenase E1 alpha subunit] + phosphate. Functionally, catalyzes the dephosphorylation and concomitant reactivation of the E1 alpha subunit (PDA1) of the pyruvate dehydrogenase complex. This is [Pyruvate dehydrogenase [acetyl-transferring]]-phosphatase 1, mitochondrial (PTC5) from Saccharomyces cerevisiae (strain ATCC 204508 / S288c) (Baker's yeast).